The chain runs to 143 residues: Endoribonuclease YbeY (143 aa).

Zn(2+) contacts are provided by His-109, His-113, and His-119.

The protein belongs to the endoribonuclease YbeY family. It depends on Zn(2+) as a cofactor.

The protein resides in the cytoplasm. Single strand-specific metallo-endoribonuclease involved in late-stage 70S ribosome quality control and in maturation of the 3' terminus of the 16S rRNA. The polypeptide is Endoribonuclease YbeY (Neorickettsia sennetsu (strain ATCC VR-367 / Miyayama) (Ehrlichia sennetsu)).